A 529-amino-acid polypeptide reads, in one-letter code: tRNA-2-methylthio-N(6)-dimethylallyladenosine synthase 1 (529 aa).

A disordered region spans residues 1-21; sequence MTQDHIVTERPPATRNDTAGN. Residues 25–141 form the MTTase N-terminal domain; it reads RTYEVRTLGC…LPVLLERSRH (117 aa). Positions 34, 70, 104, 178, 182, and 185 each coordinate [4Fe-4S] cluster. A Radical SAM core domain is found at 164-407; sequence RDSAYAAWVS…VALQERISLE (244 aa). Residues 410–480 enclose the TRAM domain; the sequence is RSLVGTRQEL…PHHLIADGPL (71 aa). Residues 481-504 are disordered; the sequence is LQHRRTPAGDASERGQTPTTRGVG.

The protein belongs to the methylthiotransferase family. MiaB subfamily. In terms of assembly, monomer. [4Fe-4S] cluster is required as a cofactor.

It is found in the cytoplasm. It catalyses the reaction N(6)-dimethylallyladenosine(37) in tRNA + (sulfur carrier)-SH + AH2 + 2 S-adenosyl-L-methionine = 2-methylsulfanyl-N(6)-dimethylallyladenosine(37) in tRNA + (sulfur carrier)-H + 5'-deoxyadenosine + L-methionine + A + S-adenosyl-L-homocysteine + 2 H(+). Its function is as follows. Catalyzes the methylthiolation of N6-(dimethylallyl)adenosine (i(6)A), leading to the formation of 2-methylthio-N6-(dimethylallyl)adenosine (ms(2)i(6)A) at position 37 in tRNAs that read codons beginning with uridine. This chain is tRNA-2-methylthio-N(6)-dimethylallyladenosine synthase 1, found in Mycobacterium marinum (strain ATCC BAA-535 / M).